Reading from the N-terminus, the 431-residue chain is Histidine--tRNA ligase (431 aa).

The protein belongs to the class-II aminoacyl-tRNA synthetase family. In terms of assembly, homodimer.

The protein resides in the cytoplasm. It carries out the reaction tRNA(His) + L-histidine + ATP = L-histidyl-tRNA(His) + AMP + diphosphate + H(+). This Limosilactobacillus fermentum (strain NBRC 3956 / LMG 18251) (Lactobacillus fermentum) protein is Histidine--tRNA ligase.